We begin with the raw amino-acid sequence, 704 residues long: Pentatricopeptide repeat-containing protein At4g28010 (704 aa).

PPR repeat units lie at residues 71–105 (LAFA…DTFI), 106–140 (NFVS…GFAF), 141–175 (NVYN…SLMP), 176–210 (DVFS…GCSW), 211–245 (SLVT…GLEA), 246–280 (DLVV…GDSP), 281–315 (CAIT…GVRP), 316–350 (NVYT…DEEP), 351–385 (NAVT…RTRP), 386–416 (DNIT…MLKD), 423–453 (DVIS…LVEK), 458–492 (DRVT…KIVR), 493–527 (NSDT…ELQP), 528–562 (SVFD…NNFP), 563–597 (DVVS…GLSP), 598–632 (DLFT…GFEP), and 633–667 (DAHI…DIVL).

It belongs to the PPR family. P subfamily.

This is Pentatricopeptide repeat-containing protein At4g28010 from Arabidopsis thaliana (Mouse-ear cress).